Consider the following 566-residue polypeptide: NAD-dependent malic enzyme (566 aa).

The active-site Proton donor is the Tyr-105. Arg-158 contacts NAD(+). The active-site Proton acceptor is the Lys-176. A divalent metal cation contacts are provided by Glu-247, Asp-248, and Asp-271. NAD(+)-binding residues include Asp-271 and Asn-419.

The protein belongs to the malic enzymes family. In terms of assembly, homotetramer. It depends on Mg(2+) as a cofactor. Mn(2+) serves as cofactor.

It carries out the reaction (S)-malate + NAD(+) = pyruvate + CO2 + NADH. The catalysed reaction is oxaloacetate + H(+) = pyruvate + CO2. The chain is NAD-dependent malic enzyme from Acinetobacter baylyi (strain ATCC 33305 / BD413 / ADP1).